Here is a 394-residue protein sequence, read N- to C-terminus: Gap junction gamma-1 protein (394 aa).

Topologically, residues 1–22 are cytoplasmic; it reads MSWSFLTRLLEEIHNHSTFVGK. The helical transmembrane segment at 23-45 threads the bilayer; that stretch reads IWLSVLIVFRIVLTAVGGESIYY. The Extracellular portion of the chain corresponds to 46–75; sequence DEQSKFVCNTEQPGCENVCYDAFAPLSHVR. The chain crosses the membrane as a helical span at residues 76–95; sequence FWVFQIILVATPSVMYLGYA. Over 96 to 176 the chain is Cytoplasmic; the sequence is IHKIARMVEH…RRIREDGLMR (81 aa). The helical transmembrane segment at 177–199 threads the bilayer; it reads IYVLQLLVRATFEVGFLIGQYLL. Residues 200–229 are Extracellular-facing; the sequence is YGFEVSPVFVCSRKPCPHKIDCFISRPTEK. Residues 230–252 form a helical membrane-spanning segment; the sequence is TIFLLIMYGVSCMCLLLNVWEML. At 253–394 the chain is on the cytoplasmic side; the sequence is HLGFGTIRDT…SGDGKNSVWI (142 aa). Residues 354-394 are disordered; it reads IQAYNNQNNPGSSSREKKSKAGSNKSSASSKSGDGKNSVWI. The segment covering 356–366 has biased composition (polar residues); that stretch reads AYNNQNNPGSS. Over residues 374-394 the composition is skewed to low complexity; that stretch reads AGSNKSSASSKSGDGKNSVWI.

The protein belongs to the connexin family. Gamma-type subfamily. In terms of assembly, a connexon is composed of a hexamer of connexins. As to expression, mostly in heart and stomach.

It is found in the cell membrane. The protein resides in the cell junction. The protein localises to the gap junction. Its function is as follows. One gap junction consists of a cluster of closely packed pairs of transmembrane channels, the connexons, through which materials of low MW diffuse from one cell to a neighboring cell. This is Gap junction gamma-1 protein (GJC1) from Gallus gallus (Chicken).